The following is a 580-amino-acid chain: Type 3 secretion system translocon protein SctE (580 aa).

Helical transmembrane passes span isoleucine 313–serine 333 and isoleucine 399–valine 419.

It belongs to the SctE/SipB/YopB family. In terms of assembly, the core secretion machinery of the T3SS is composed of approximately 20 different proteins, including cytoplasmic components, a base, an export apparatus and a needle. This subunit is involved in the formation of a pore, called the translocon, in host membrane.

It localises to the secreted. The protein resides in the host membrane. Component of the type III secretion system (T3SS), also called injectisome, which is used to inject bacterial effector proteins into eukaryotic host cells. IpaB/SctE and IpaC/SctB are inserted into the host membrane where they form a pore and allow the translocation of effector proteins into the cytosol of target cells. The sequence is that of Type 3 secretion system translocon protein SctE from Shigella dysenteriae.